Reading from the N-terminus, the 560-residue chain is Dihydroxy-acid dehydratase (560 aa).

C50 provides a ligand contact to [2Fe-2S] cluster. Position 82 (D82) interacts with Mg(2+). [2Fe-2S] cluster is bound at residue C123. Residues D124 and K125 each coordinate Mg(2+). Position 125 is an N6-carboxylysine (K125). C195 is a [2Fe-2S] cluster binding site. E447 contacts Mg(2+). S473 functions as the Proton acceptor in the catalytic mechanism.

The protein belongs to the IlvD/Edd family. In terms of assembly, homodimer. [2Fe-2S] cluster serves as cofactor. Mg(2+) is required as a cofactor.

It catalyses the reaction (2R)-2,3-dihydroxy-3-methylbutanoate = 3-methyl-2-oxobutanoate + H2O. The catalysed reaction is (2R,3R)-2,3-dihydroxy-3-methylpentanoate = (S)-3-methyl-2-oxopentanoate + H2O. It functions in the pathway amino-acid biosynthesis; L-isoleucine biosynthesis; L-isoleucine from 2-oxobutanoate: step 3/4. It participates in amino-acid biosynthesis; L-valine biosynthesis; L-valine from pyruvate: step 3/4. Its function is as follows. Functions in the biosynthesis of branched-chain amino acids. Catalyzes the dehydration of (2R,3R)-2,3-dihydroxy-3-methylpentanoate (2,3-dihydroxy-3-methylvalerate) into 2-oxo-3-methylpentanoate (2-oxo-3-methylvalerate) and of (2R)-2,3-dihydroxy-3-methylbutanoate (2,3-dihydroxyisovalerate) into 2-oxo-3-methylbutanoate (2-oxoisovalerate), the penultimate precursor to L-isoleucine and L-valine, respectively. This chain is Dihydroxy-acid dehydratase, found in Methylibium petroleiphilum (strain ATCC BAA-1232 / LMG 22953 / PM1).